The sequence spans 89 residues: Neuropeptide S (89 aa).

Positions 1–23 (MIGSLKLSFVLALSLSVMHVLWC) are cleaved as a signal peptide. Positions 24 to 69 (YPVLSSKVPGKPDYFLILLSSCPARLEGSDRLAFLKPILEKTSMKR) are excised as a propeptide.

Its subcellular location is the secreted. In terms of biological role, may play an important anorexigenic role. Modulates arousal and anxiety as well as increases locomotor activity. Binds to its receptor NPSR1 with nanomolar affinity to increase intracellular calcium concentrations. The chain is Neuropeptide S (Nps) from Mus musculus (Mouse).